Reading from the N-terminus, the 445-residue chain is Phosphoglucosamine mutase (445 aa).

Catalysis depends on serine 102, which acts as the Phosphoserine intermediate. Mg(2+) contacts are provided by serine 102, aspartate 241, aspartate 243, and aspartate 245. Position 102 is a phosphoserine (serine 102).

This sequence belongs to the phosphohexose mutase family. Requires Mg(2+) as cofactor. Activated by phosphorylation.

The enzyme catalyses alpha-D-glucosamine 1-phosphate = D-glucosamine 6-phosphate. In terms of biological role, catalyzes the conversion of glucosamine-6-phosphate to glucosamine-1-phosphate. This Shigella flexneri serotype 5b (strain 8401) protein is Phosphoglucosamine mutase.